The primary structure comprises 240 residues: Tetrahydromethanopterin S-methyltransferase subunit A (240 aa).

Residues M1–S216 are Cytoplasmic-facing. H85 provides a ligand contact to 5-hydroxybenzimidazolylcob(I)amide. A helical transmembrane segment spans residues G217–L234. The Extracellular segment spans residues L235–L240.

Belongs to the MtrA family. The complex is composed of 8 subunits; MtrA, MtrB, MtrC, MtrD, MtrE, MtrF, MtrG and MtrH. It depends on 5-hydroxybenzimidazolylcob(I)amide as a cofactor.

The protein resides in the cell membrane. The enzyme catalyses 5-methyl-5,6,7,8-tetrahydromethanopterin + coenzyme M + 2 Na(+)(in) = 5,6,7,8-tetrahydromethanopterin + methyl-coenzyme M + 2 Na(+)(out). Its pathway is one-carbon metabolism; methanogenesis from CO(2); methyl-coenzyme M from 5,10-methylene-5,6,7,8-tetrahydromethanopterin: step 2/2. Part of a complex that catalyzes the formation of methyl-coenzyme M and tetrahydromethanopterin from coenzyme M and methyl-tetrahydromethanopterin. This is an energy-conserving, sodium-ion translocating step. The protein is Tetrahydromethanopterin S-methyltransferase subunit A of Methanococcus aeolicus (strain ATCC BAA-1280 / DSM 17508 / OCM 812 / Nankai-3).